Here is a 45-residue protein sequence, read N- to C-terminus: uncharacterized protein (45 aa).

This is an uncharacterized protein from Saccharomyces cerevisiae (strain ATCC 204508 / S288c) (Baker's yeast).